We begin with the raw amino-acid sequence, 534 residues long: Cytidylyl-2-hydroxyethylphosphonate methyltransferase (534 aa).

A B12-binding domain is found at 38–195 (KVLLLNPSAT…EHLNGNVSDD (158 aa)). The 229-residue stretch at 268 to 496 (TVGSRVGQLY…TYKQGIINVP (229 aa)) folds into the Radical SAM core domain. [4Fe-4S] cluster is bound by residues Cys-282, Cys-286, and Cys-289.

This sequence belongs to the radical SAM superfamily. The cofactor is [4Fe-4S] cluster. Methylcob(III)alamin is required as a cofactor.

It carries out the reaction cytidine 5'-{[hydroxy(2-hydroxyethyl)phosphonoyl]phosphate} + AH2 + 2 S-adenosyl-L-methionine = cytidine 5'-({hydroxy[(S)-2-hydroxypropyl]phosphonoyl}phosphate) + 5'-deoxyadenosine + L-methionine + A + S-adenosyl-L-homocysteine + 2 H(+). Its pathway is antibiotic biosynthesis; fosfomycin biosynthesis. Involved in fosfomycin biosynthesis. Catalyzes the C-methylation of cytidylyl-2-hydroxyethylphosphonate (HEP-CMP) to form cytidylyl-2-hydroxypropylphosphonate (HPP-CMP). The C-methylation is not stereoselective and the ratio of (S)- to (R)-HPP-CMP is almost equal in vitro. The chain is Cytidylyl-2-hydroxyethylphosphonate methyltransferase from Streptomyces wedmorensis.